The primary structure comprises 308 residues: tRNA dimethylallyltransferase (308 aa).

An ATP-binding site is contributed by 8-15 (GPTGTGKS). 10 to 15 (TGTGKS) lines the substrate pocket.

Belongs to the IPP transferase family. In terms of assembly, monomer. It depends on Mg(2+) as a cofactor.

The catalysed reaction is adenosine(37) in tRNA + dimethylallyl diphosphate = N(6)-dimethylallyladenosine(37) in tRNA + diphosphate. Catalyzes the transfer of a dimethylallyl group onto the adenine at position 37 in tRNAs that read codons beginning with uridine, leading to the formation of N6-(dimethylallyl)adenosine (i(6)A). This chain is tRNA dimethylallyltransferase, found in Mycolicibacterium vanbaalenii (strain DSM 7251 / JCM 13017 / BCRC 16820 / KCTC 9966 / NRRL B-24157 / PYR-1) (Mycobacterium vanbaalenii).